The following is a 277-amino-acid chain: Large ribosomal subunit protein uL2 (277 aa).

Disordered stretches follow at residues 35–58 (QPLPKRAGRNNQGKLTVRHHGGGH) and 213–277 (WKGI…RKRK).

It belongs to the universal ribosomal protein uL2 family. Part of the 50S ribosomal subunit. Forms a bridge to the 30S subunit in the 70S ribosome.

In terms of biological role, one of the primary rRNA binding proteins. Required for association of the 30S and 50S subunits to form the 70S ribosome, for tRNA binding and peptide bond formation. It has been suggested to have peptidyltransferase activity; this is somewhat controversial. Makes several contacts with the 16S rRNA in the 70S ribosome. This Staphylococcus carnosus (strain TM300) protein is Large ribosomal subunit protein uL2.